The sequence spans 435 residues: GTPase Der (435 aa).

EngA-type G domains are found at residues 3-168 (PLVA…PDET) and 176-351 (IKLA…QNRQ). GTP contacts are provided by residues 9–16 (GRPNVGKS), 56–60 (DTGGY), 120–123 (NKVE), 182–189 (GRPNVGKS), 229–233 (DTAGL), and 294–297 (NKWD). The region spanning 352-435 (KKISTSELNR…VPVSFRYRKK (84 aa)) is the KH-like domain.

It belongs to the TRAFAC class TrmE-Era-EngA-EngB-Septin-like GTPase superfamily. EngA (Der) GTPase family. Associates with the 50S ribosomal subunit.

In terms of biological role, GTPase that plays an essential role in the late steps of ribosome biogenesis. This chain is GTPase Der, found in Chlorobium phaeobacteroides (strain BS1).